A 374-amino-acid chain; its full sequence is Isocitrate dehydrogenase [NAD] catalytic subunit 6, mitochondrial (374 aa).

The transit peptide at 1–44 directs the protein to the mitochondrion; sequence MTMTAFLARRLIGNGSSQILGTSSSSSGPFISVSRAFFSSSTPI. 4 residues coordinate substrate: Arg-127, Arg-137, Arg-158, and Asp-245. Mg(2+)-binding residues include Asp-245, Asp-269, and Asp-273.

This sequence belongs to the isocitrate and isopropylmalate dehydrogenases family. Heterooligomer of catalytic and regulatory subunits. Requires Mg(2+) as cofactor. Mn(2+) is required as a cofactor. Ubiquitous. Predominantly expressed in leaves.

It localises to the mitochondrion. The enzyme catalyses D-threo-isocitrate + NAD(+) = 2-oxoglutarate + CO2 + NADH. Functionally, catalytic subunit of the NAD(+)-dependent isocitrate dehydrogenase involved in the oxidative decarboxylation of isocitrate to 2-oxoglutarate. Performs an essential role in the oxidative function of the citric acid cycle. In Arabidopsis thaliana (Mouse-ear cress), this protein is Isocitrate dehydrogenase [NAD] catalytic subunit 6, mitochondrial (IDH6).